The following is a 167-amino-acid chain: Crossover junction endodeoxyribonuclease RuvC (167 aa).

Active-site residues include Asp14, Glu75, and Asp147. Residues Asp14, Glu75, and Asp147 each coordinate Mg(2+).

This sequence belongs to the RuvC family. As to quaternary structure, homodimer which binds Holliday junction (HJ) DNA. The HJ becomes 2-fold symmetrical on binding to RuvC with unstacked arms; it has a different conformation from HJ DNA in complex with RuvA. In the full resolvosome a probable DNA-RuvA(4)-RuvB(12)-RuvC(2) complex forms which resolves the HJ. It depends on Mg(2+) as a cofactor.

The protein localises to the cytoplasm. The catalysed reaction is Endonucleolytic cleavage at a junction such as a reciprocal single-stranded crossover between two homologous DNA duplexes (Holliday junction).. In terms of biological role, the RuvA-RuvB-RuvC complex processes Holliday junction (HJ) DNA during genetic recombination and DNA repair. Endonuclease that resolves HJ intermediates. Cleaves cruciform DNA by making single-stranded nicks across the HJ at symmetrical positions within the homologous arms, yielding a 5'-phosphate and a 3'-hydroxyl group; requires a central core of homology in the junction. The consensus cleavage sequence is 5'-(A/T)TT(C/G)-3'. Cleavage occurs on the 3'-side of the TT dinucleotide at the point of strand exchange. HJ branch migration catalyzed by RuvA-RuvB allows RuvC to scan DNA until it finds its consensus sequence, where it cleaves and resolves the cruciform DNA. The polypeptide is Crossover junction endodeoxyribonuclease RuvC (Synechocystis sp. (strain ATCC 27184 / PCC 6803 / Kazusa)).